Reading from the N-terminus, the 387-residue chain is ATP phosphoribosyltransferase regulatory subunit (387 aa).

Belongs to the class-II aminoacyl-tRNA synthetase family. HisZ subfamily. As to quaternary structure, heteromultimer composed of HisG and HisZ subunits.

The protein resides in the cytoplasm. Its pathway is amino-acid biosynthesis; L-histidine biosynthesis; L-histidine from 5-phospho-alpha-D-ribose 1-diphosphate: step 1/9. Functionally, required for the first step of histidine biosynthesis. May allow the feedback regulation of ATP phosphoribosyltransferase activity by histidine. The sequence is that of ATP phosphoribosyltransferase regulatory subunit from Ralstonia pickettii (strain 12J).